The chain runs to 585 residues: Pyruvate kinase (585 aa).

Arg32 lines the substrate pocket. Residues Asn34, Ser36, Asp66, and Thr67 each coordinate K(+). 34-37 (NFSH) provides a ligand contact to ATP. Positions 73 and 156 each coordinate ATP. Glu221 serves as a coordination point for Mg(2+). Residues Gly244, Asp245, and Thr277 each coordinate substrate. Mg(2+) is bound at residue Asp245.

Belongs to the pyruvate kinase family. This sequence in the C-terminal section; belongs to the PEP-utilizing enzyme family. Mg(2+) serves as cofactor. The cofactor is K(+).

It catalyses the reaction pyruvate + ATP = phosphoenolpyruvate + ADP + H(+). It functions in the pathway carbohydrate degradation; glycolysis; pyruvate from D-glyceraldehyde 3-phosphate: step 5/5. This Staphylococcus aureus (strain MRSA252) protein is Pyruvate kinase (pyk).